The primary structure comprises 456 residues: Esterase MT1326 (456 aa).

3 consecutive LysM domains span residues 3–50, 54–101, and 105–152; these read STHA…RLIM, TRYT…RLIM, and TRYT…VLVI. Catalysis depends on residues Ser294, Asp391, and His425.

The protein belongs to the AB hydrolase superfamily.

It localises to the secreted. The protein resides in the cell wall. It catalyses the reaction a fatty acid ester + H2O = an aliphatic alcohol + a fatty acid + H(+). Exhibits lipolytic activity with medium chain length esters as optimum substrates. This is Esterase MT1326 from Mycobacterium tuberculosis (strain CDC 1551 / Oshkosh).